We begin with the raw amino-acid sequence, 98 residues long: Integration host factor subunit alpha (98 aa).

Positions 49–71 (FGNFDLRDKNQRPGRNPKTGEDI) are disordered.

It belongs to the bacterial histone-like protein family. As to quaternary structure, heterodimer of an alpha and a beta chain.

Functionally, this protein is one of the two subunits of integration host factor, a specific DNA-binding protein that functions in genetic recombination as well as in transcriptional and translational control. This chain is Integration host factor subunit alpha, found in Edwardsiella ictaluri (strain 93-146).